A 298-amino-acid chain; its full sequence is Putative S-adenosyl-L-methionine-dependent methyltransferase MAV_0778 (298 aa).

S-adenosyl-L-methionine-binding positions include aspartate 124 and 153–154 (DL).

Belongs to the UPF0677 family.

Functionally, exhibits S-adenosyl-L-methionine-dependent methyltransferase activity. In Mycobacterium avium (strain 104), this protein is Putative S-adenosyl-L-methionine-dependent methyltransferase MAV_0778.